The following is a 489-amino-acid chain: Acetyl-coenzyme A carboxylase carboxyl transferase subunit beta, chloroplastic (489 aa).

One can recognise a CoA carboxyltransferase N-terminal domain in the interval 222–489 (LWVQCENCYG…FFPLNSNSIK (268 aa)). Residues Cys-226, Cys-229, Cys-245, and Cys-248 each coordinate Zn(2+). The C4-type zinc finger occupies 226–248 (CENCYGLNYKKFFRSKMNICEQC).

It belongs to the AccD/PCCB family. Acetyl-CoA carboxylase is a heterohexamer composed of biotin carboxyl carrier protein, biotin carboxylase and 2 subunits each of ACCase subunit alpha and ACCase plastid-coded subunit beta (accD). Requires Zn(2+) as cofactor.

Its subcellular location is the plastid. The protein resides in the chloroplast stroma. The catalysed reaction is N(6)-carboxybiotinyl-L-lysyl-[protein] + acetyl-CoA = N(6)-biotinyl-L-lysyl-[protein] + malonyl-CoA. It functions in the pathway lipid metabolism; malonyl-CoA biosynthesis; malonyl-CoA from acetyl-CoA: step 1/1. In terms of biological role, component of the acetyl coenzyme A carboxylase (ACC) complex. Biotin carboxylase (BC) catalyzes the carboxylation of biotin on its carrier protein (BCCP) and then the CO(2) group is transferred by the transcarboxylase to acetyl-CoA to form malonyl-CoA. The polypeptide is Acetyl-coenzyme A carboxylase carboxyl transferase subunit beta, chloroplastic (Buxus microphylla (Littleleaf boxwood)).